We begin with the raw amino-acid sequence, 283 residues long: Pantothenate synthetase (283 aa).

30–37 (MGALHEGH) is a binding site for ATP. The active-site Proton donor is histidine 37. Position 61 (glutamine 61) interacts with (R)-pantoate. Glutamine 61 is a beta-alanine binding site. 147-150 (GMKD) provides a ligand contact to ATP. Glutamine 153 lines the (R)-pantoate pocket. Residues valine 176 and 184 to 187 (LSSR) contribute to the ATP site.

This sequence belongs to the pantothenate synthetase family. Homodimer.

The protein localises to the cytoplasm. The catalysed reaction is (R)-pantoate + beta-alanine + ATP = (R)-pantothenate + AMP + diphosphate + H(+). The protein operates within cofactor biosynthesis; (R)-pantothenate biosynthesis; (R)-pantothenate from (R)-pantoate and beta-alanine: step 1/1. Its function is as follows. Catalyzes the condensation of pantoate with beta-alanine in an ATP-dependent reaction via a pantoyl-adenylate intermediate. The sequence is that of Pantothenate synthetase from Endomicrobium trichonymphae.